The chain runs to 680 residues: tRNA 5-methylaminomethyl-2-thiouridine biosynthesis bifunctional protein MnmC (680 aa).

The tract at residues Met1–Pro267 is tRNA (mnm(5)s(2)U34)-methyltransferase. Residues Ile273–Leu680 form an FAD-dependent cmnm(5)s(2)U34 oxidoreductase region.

In the N-terminal section; belongs to the methyltransferase superfamily. tRNA (mnm(5)s(2)U34)-methyltransferase family. This sequence in the C-terminal section; belongs to the DAO family. FAD serves as cofactor.

It localises to the cytoplasm. The catalysed reaction is 5-aminomethyl-2-thiouridine(34) in tRNA + S-adenosyl-L-methionine = 5-methylaminomethyl-2-thiouridine(34) in tRNA + S-adenosyl-L-homocysteine + H(+). Catalyzes the last two steps in the biosynthesis of 5-methylaminomethyl-2-thiouridine (mnm(5)s(2)U) at the wobble position (U34) in tRNA. Catalyzes the FAD-dependent demodification of cmnm(5)s(2)U34 to nm(5)s(2)U34, followed by the transfer of a methyl group from S-adenosyl-L-methionine to nm(5)s(2)U34, to form mnm(5)s(2)U34. In Shewanella putrefaciens (strain CN-32 / ATCC BAA-453), this protein is tRNA 5-methylaminomethyl-2-thiouridine biosynthesis bifunctional protein MnmC.